A 283-amino-acid chain; its full sequence is Phospholipase C (283 aa).

The signal sequence occupies residues 1–24 (MKKKVLALAAAITVVAPLQSVAFA). A propeptide spanning residues 25–38 (HENDGGSKIKIVHR) is cleaved from the precursor. Tryptophan 39, histidine 52, aspartate 93, histidine 107, histidine 156, aspartate 160, histidine 166, histidine 180, and glutamate 184 together coordinate Zn(2+). Positions 39–283 (WSAEDKHKEG…QLWFDTYGDR (245 aa)) constitute a Zn-dependent PLC domain.

It belongs to the bacterial zinc-metallophospholipase C family. Monomer. Zn(2+) is required as a cofactor.

The enzyme catalyses a 1,2-diacyl-sn-glycero-3-phosphocholine + H2O = phosphocholine + a 1,2-diacyl-sn-glycerol + H(+). Functionally, required, with sphingomyelinase, to effect target cell lysis (hemolysis). In Bacillus cereus, this protein is Phospholipase C (plc).